A 255-amino-acid polypeptide reads, in one-letter code: Testis-specific H1 histone (255 aa).

A disordered region spans residues 1–54 (MEQALTGEAQSRWPRRGGSGAMAEAPGPSGESRGHSATQLPAEKTVGGPSRGCS). S56 carries the phosphoserine modification. The segment covering 124–134 (KVPKPRRKPGR) has biased composition (basic residues). The interval 124 to 255 (KVPKPRRKPG…PKKPAQRTIQ (132 aa)) is disordered. Residues 142–152 (RAPWRTPAAPR) show a composition bias toward low complexity. 2 stretches are compositionally biased toward basic residues: residues 153–166 (SSRRRRQPLRKAAR) and 174–194 (RNARAKAKANARARRTRRARP). Basic and acidic residues-rich tracts occupy residues 195–230 (RAKEPPCARAKEEAGATAADEGRGQAVKEDTTPRSG) and 238–248 (KPREEKQEPKK).

Belongs to the histone H1/H5 family. As to expression, testis-specific.

Its subcellular location is the nucleus. The protein localises to the chromosome. Essential for normal spermatogenesis and male fertility. Required for proper cell restructuring and DNA condensation during the elongation phase of spermiogenesis. Involved in the histone-protamine transition of sperm chromatin and the subsequent production of functional sperm. Binds both double-stranded and single-stranded DNA, ATP and protamine-1. The sequence is that of Testis-specific H1 histone from Homo sapiens (Human).